Consider the following 1938-residue polypeptide: Myosin-13 (1938 aa).

The Myosin N-terminal SH3-like domain occupies 33–82 (DSKKACFVADNKEMYVKGMIQTRENDKVIVKTLDDRMLTLNNDQVFPMNP). The Myosin motor domain occupies 86-782 (DKIEDMAMMT…LLGLLEEMRD (697 aa)). Lys130 is subject to N6,N6,N6-trimethyllysine. ATP is bound at residue 179–186 (GESGAGKT). 2 actin-binding regions span residues 659–681 (LNKL…IPNE) and 761–775 (RFGN…GLLG). Residues 785 to 814 (LVTLMTSTQAVCRGYLMRVEFKKMMERRDS) enclose the IQ domain. The stretch at 843–1938 (LLKSAEAEKE…RDVGSQKMEE (1096 aa)) forms a coiled coil. A disordered region spans residues 1917 to 1938 (AESQVNKLRAKSRDVGSQKMEE). Over residues 1927 to 1938 (KSRDVGSQKMEE) the composition is skewed to basic and acidic residues.

Belongs to the TRAFAC class myosin-kinesin ATPase superfamily. Myosin family. As to quaternary structure, muscle myosin is a hexameric protein that consists of 2 heavy chain subunits (MHC), 2 alkali light chain subunits (MLC) and 2 regulatory light chain subunits (MLC-2). In terms of tissue distribution, specifically expressed in extraocular and laryngeal muscles.

It is found in the cytoplasm. It localises to the myofibril. In terms of biological role, fast twitching myosin mediating the high-velocity and low-tension contractions of specific striated muscles. The chain is Myosin-13 (MYH13) from Homo sapiens (Human).